A 262-amino-acid polypeptide reads, in one-letter code: ATP synthase subunit a (262 aa).

7 helical membrane-spanning segments follow: residues 30 to 50 (ITSL…LTIF), 64 to 84 (WNIV…DQIG), 91 to 111 (LIYF…NILG), 123 to 143 (ISVT…IGFS), 149 to 169 (FFSL…LVLI), 195 to 215 (LFGV…SLLL), and 220 to 240 (ITLP…VALL).

This sequence belongs to the ATPase A chain family. In terms of assembly, F-type ATPases have 2 components, CF(1) - the catalytic core - and CF(0) - the membrane proton channel. CF(1) has five subunits: alpha(3), beta(3), gamma(1), delta(1), epsilon(1). CF(0) has three main subunits: a, b and c.

It localises to the mitochondrion inner membrane. Functionally, mitochondrial membrane ATP synthase (F(1)F(0) ATP synthase or Complex V) produces ATP from ADP in the presence of a proton gradient across the membrane which is generated by electron transport complexes of the respiratory chain. F-type ATPases consist of two structural domains, F(1) - containing the extramembraneous catalytic core and F(0) - containing the membrane proton channel, linked together by a central stalk and a peripheral stalk. During catalysis, ATP synthesis in the catalytic domain of F(1) is coupled via a rotary mechanism of the central stalk subunits to proton translocation. Key component of the proton channel; it may play a direct role in the translocation of protons across the membrane. This is ATP synthase subunit a (ATP6) from Allomyces macrogynus.